We begin with the raw amino-acid sequence, 532 residues long: CTP synthase (532 aa).

Positions 1-265 (MKYIVVTGGV…DEYLMRKLNL (265 aa)) are amidoligase domain. Residue Ser12 coordinates CTP. Ser12 is a UTP binding site. ATP is bound by residues 13–18 (GLGKGI) and Asp70. 2 residues coordinate Mg(2+): Asp70 and Glu140. CTP-binding positions include 147-149 (DIE), 186-191 (KTKPTQ), and Lys222. Residues 186 to 191 (KTKPTQ) and Lys222 each bind UTP. The 241-residue stretch at 289 to 529 (SIAIVGKYVD…VRAALKYRRE (241 aa)) folds into the Glutamine amidotransferase type-1 domain. Gly349 contributes to the L-glutamine binding site. Cys376 serves as the catalytic Nucleophile; for glutamine hydrolysis. L-glutamine is bound by residues 377–380 (FGFQ), Glu400, and Arg457. Catalysis depends on residues His502 and Glu504.

It belongs to the CTP synthase family. In terms of assembly, homotetramer.

The catalysed reaction is UTP + L-glutamine + ATP + H2O = CTP + L-glutamate + ADP + phosphate + 2 H(+). It catalyses the reaction L-glutamine + H2O = L-glutamate + NH4(+). It carries out the reaction UTP + NH4(+) + ATP = CTP + ADP + phosphate + 2 H(+). It functions in the pathway pyrimidine metabolism; CTP biosynthesis via de novo pathway; CTP from UDP: step 2/2. Allosterically activated by GTP, when glutamine is the substrate; GTP has no effect on the reaction when ammonia is the substrate. The allosteric effector GTP functions by stabilizing the protein conformation that binds the tetrahedral intermediate(s) formed during glutamine hydrolysis. Inhibited by the product CTP, via allosteric rather than competitive inhibition. Functionally, catalyzes the ATP-dependent amination of UTP to CTP with either L-glutamine or ammonia as the source of nitrogen. Regulates intracellular CTP levels through interactions with the four ribonucleotide triphosphates. The polypeptide is CTP synthase (Archaeoglobus fulgidus (strain ATCC 49558 / DSM 4304 / JCM 9628 / NBRC 100126 / VC-16)).